The sequence spans 308 residues: MNPVVVVHGGGASNISKDRKERVRQGILRAATVGYNILKQGGSAVDAVEGAVTVLEDDPDFNAGCGSVLNENGEVEMDASIMNGKDLSAGAVSAVRCIANPIKLARLVMDKTPHCFLTDQGAARFAAANGIPTIPGQQLVTERSRKRLEKEKLEKDAQKPDCQKNLGTVGAVALDCQGNLAYATSTGGIVNKMPGRVGDTPCVGSGGYADNDIGAVSTTGHGESILKVNLARLALFHVEQGKSLEEAANASLGHMKSKVKGVGGIIMVNKAGEWAVKWTSTSMPWAAAKDGKLHSGIDFGDTSIIDLS.

At M1 the chain carries N-acetylmethionine. T168 acts as the Nucleophile in catalysis. Residues 196 to 199 and 219 to 222 contribute to the substrate site; these read RVGD and TGHG.

The protein belongs to the Ntn-hydrolase family. Heterodimer of an alpha and beta chain produced by autocleavage. This heterodimer may then dimerize in turn, giving rise to a heterotetramer. In terms of processing, cleaved into an alpha and beta chain by autocatalysis; this activates the enzyme. The N-terminal residue of the beta subunit is responsible for the nucleophile hydrolase activity.

The protein localises to the cytoplasm. The enzyme catalyses L-asparagine + H2O = L-aspartate + NH4(+). It carries out the reaction Cleavage of a beta-linked Asp residue from the N-terminus of a polypeptide.. Has both L-asparaginase and beta-aspartyl peptidase activity. May be involved in the production of L-aspartate, which can act as an excitatory neurotransmitter in some brain regions. Is highly active with L-Asp beta-methyl ester. Besides, has catalytic activity toward beta-aspartyl dipeptides and their methyl esters, including beta-L-Asp-L-Phe, beta-L-Asp-L-Phe methyl ester (aspartame), beta-L-Asp-L-Ala, beta-L-Asp-L-Leu and beta-L-Asp-L-Lys. Does not have aspartylglucosaminidase activity and is inactive toward GlcNAc-L-Asn. Likewise, has no activity toward glutamine. In Bos taurus (Bovine), this protein is Isoaspartyl peptidase/L-asparaginase (ASRGL1).